The following is a 366-amino-acid chain: Beta sliding clamp (366 aa).

Belongs to the beta sliding clamp family. In terms of assembly, forms a ring-shaped head-to-tail homodimer around DNA which binds and tethers DNA polymerases and other proteins to the DNA. The DNA replisome complex has a single clamp-loading complex (3 tau and 1 each of delta, delta', psi and chi subunits) which binds 3 Pol III cores (1 core on the leading strand and 2 on the lagging strand) each with a beta sliding clamp dimer. Additional proteins in the replisome are other copies of gamma, psi and chi, Ssb, DNA helicase and RNA primase.

It localises to the cytoplasm. Functionally, confers DNA tethering and processivity to DNA polymerases and other proteins. Acts as a clamp, forming a ring around DNA (a reaction catalyzed by the clamp-loading complex) which diffuses in an ATP-independent manner freely and bidirectionally along dsDNA. Initially characterized for its ability to contact the catalytic subunit of DNA polymerase III (Pol III), a complex, multichain enzyme responsible for most of the replicative synthesis in bacteria; Pol III exhibits 3'-5' exonuclease proofreading activity. The beta chain is required for initiation of replication as well as for processivity of DNA replication. This is Beta sliding clamp (dnaN) from Buchnera aphidicola subsp. Rhopalosiphum padi.